The chain runs to 145 residues: MVLSFILVQNRQGKTRLAKWYAPYSDEEKVKLKGEVHRLVAPRDQKYQSNFVEFKRSTKIVYRRYAGLFFCVCVDATDNELAYLEAIHFFVEVLDQFFGNVCELDLVFNFYKVYAILDEVFLAGEIEETSKQVVLTRLEHLDKLE.

It belongs to the adaptor complexes small subunit family. In terms of assembly, adaptor protein complex 2 (AP-2) is a heterotetramer composed of two large adaptins (alpha-type subunit apl3 and beta-type subunit apl1), a medium chain (mu-type subunit apm4) and a small adaptin (sigma-type subunit aps2).

It is found in the cell membrane. Its subcellular location is the membrane. It localises to the coated pit. Its function is as follows. Component of the adaptor complexes which link clathrin to receptors in coated vesicles. Clathrin-associated protein complexes are believed to interact with the cytoplasmic tails of membrane proteins, leading to their selection and concentration. This chain is AP-2 complex subunit sigma (aps2), found in Aspergillus fumigatus (strain ATCC MYA-4609 / CBS 101355 / FGSC A1100 / Af293) (Neosartorya fumigata).